Consider the following 598-residue polypeptide: Vanadium-dependent bromoperoxidase (598 aa).

Phe361, Gln363, Asp365, Asp368, and Gln370 together coordinate Ca(2+). Lys400 and Arg408 together coordinate vanadate. His480 is a catalytic residue. Ser485, Gly486, His487, Arg547, and His553 together coordinate vanadate. His487 is a catalytic residue.

Belongs to the vanadium-dependent haloperoxidase family. As to quaternary structure, homododecamer. The cofactor is Ca(2+). Requires vanadate as cofactor.

It carries out the reaction RH + Br(-) + H2O2 = RBr + 2 H2O.. Its function is as follows. Catalyzes the halogenation of organic substrates in the presence of hydrogen peroxide. The polypeptide is Vanadium-dependent bromoperoxidase (Corallina officinalis (Coral seaweed)).